The primary structure comprises 254 residues: Pimeloyl-[acyl-carrier protein] methyl ester esterase (254 aa).

Residues 14 to 242 form the AB hydrolase-1 domain; that stretch reads LVLLHGWGMN…ASHAPFISHP (229 aa). Residues tryptophan 20, 82-83, and 143-147 contribute to the substrate site; these read SL and FLAIQ. The active-site Nucleophile is serine 82. Active-site residues include aspartate 207 and histidine 235. Residue histidine 235 coordinates substrate.

It belongs to the AB hydrolase superfamily. Carboxylesterase BioH family. Monomer.

Its subcellular location is the cytoplasm. The enzyme catalyses 6-carboxyhexanoyl-[ACP] methyl ester + H2O = 6-carboxyhexanoyl-[ACP] + methanol + H(+). It functions in the pathway cofactor biosynthesis; biotin biosynthesis. In terms of biological role, the physiological role of BioH is to remove the methyl group introduced by BioC when the pimeloyl moiety is complete. It allows to synthesize pimeloyl-ACP via the fatty acid synthetic pathway through the hydrolysis of the ester bonds of pimeloyl-ACP esters. In Aeromonas salmonicida (strain A449), this protein is Pimeloyl-[acyl-carrier protein] methyl ester esterase.